The chain runs to 466 residues: Phytase A (466 aa).

A signal peptide spans 1–19 (MGFLAIVLSVALLFRSTSG). An intrachain disulfide couples cysteine 31 to cysteine 40. 1D-myo-inositol hexakisphosphate contacts are provided by tyrosine 51, arginine 81, histidine 82, arginine 85, and threonine 88. Disulfide bonds link cysteine 71/cysteine 414, cysteine 215/cysteine 465, cysteine 264/cysteine 282, and cysteine 436/cysteine 444. The Nucleophile role is filled by histidine 82. Asparagine 120 carries N-linked (GlcNAc...) asparagine glycosylation. Position 165 (arginine 165) interacts with 1D-myo-inositol hexakisphosphate. Asparagine 207 and asparagine 230 each carry an N-linked (GlcNAc...) asparagine glycan. Position 301 (lysine 301) interacts with 1D-myo-inositol hexakisphosphate. Asparagine 339 and asparagine 352 each carry an N-linked (GlcNAc...) asparagine glycan. 1D-myo-inositol hexakisphosphate contacts are provided by histidine 361 and aspartate 362. Residue asparagine 376 is glycosylated (N-linked (GlcNAc...) asparagine).

The protein belongs to the histidine acid phosphatase family. In terms of assembly, monomer.

The protein resides in the secreted. It catalyses the reaction 1D-myo-inositol hexakisphosphate + H2O = 1D-myo-inositol 1,2,4,5,6-pentakisphosphate + phosphate. The enzyme catalyses 1D-myo-inositol 1,2,4,5,6-pentakisphosphate + H2O = 1D-myo-inositol 1,2,5,6-tetrakisphosphate + phosphate. It carries out the reaction 1D-myo-inositol 1,2,5,6-tetrakisphosphate + H2O = 1D-myo-inositol 1,2,6-trisphosphate + phosphate. The catalysed reaction is 1D-myo-inositol 1,2,6-trisphosphate + H2O = 1D-myo-inositol 1,2-bisphosphate + phosphate. It catalyses the reaction 1D-myo-inositol 1,2-bisphosphate + H2O = 1D-myo-inositol 2-phosphate + phosphate. Catalyzes the phosphate monoester hydrolysis of phytic acid (myo-inositol hexakisphosphate), which results in the stepwise formation of myo-inositol pentakis-, tetrakis-, tris-, bis-, and monophosphates, as well as the liberation of inorganic phosphate. Myo-inositol 2-monophosphate is the end product. Has a broad substrate specificity and is also able to dephosphorylate other classic acid phosphatase substrates such as p-nitrophenyl phosphate, phenyl phosphate, fructose 1,6-bisphosphate, glucose 6-phosphate, 3-phosphoglycerate, as well as ADP and ATP. The chain is Phytase A from Aspergillus terreus.